The following is a 176-amino-acid chain: NAD(P)H-quinone oxidoreductase subunit J (176 aa).

It belongs to the complex I 30 kDa subunit family. In terms of assembly, NDH-1 can be composed of about 15 different subunits; different subcomplexes with different compositions have been identified which probably have different functions.

The protein resides in the cellular thylakoid membrane. It carries out the reaction a plastoquinone + NADH + (n+1) H(+)(in) = a plastoquinol + NAD(+) + n H(+)(out). The catalysed reaction is a plastoquinone + NADPH + (n+1) H(+)(in) = a plastoquinol + NADP(+) + n H(+)(out). In terms of biological role, NDH-1 shuttles electrons from an unknown electron donor, via FMN and iron-sulfur (Fe-S) centers, to quinones in the respiratory and/or the photosynthetic chain. The immediate electron acceptor for the enzyme in this species is believed to be plastoquinone. Couples the redox reaction to proton translocation, and thus conserves the redox energy in a proton gradient. Cyanobacterial NDH-1 also plays a role in inorganic carbon-concentration. This chain is NAD(P)H-quinone oxidoreductase subunit J, found in Prochlorococcus marinus subsp. pastoris (strain CCMP1986 / NIES-2087 / MED4).